The chain runs to 135 residues: Ribosome-binding factor A (135 aa).

This sequence belongs to the RbfA family. As to quaternary structure, monomer. Binds 30S ribosomal subunits, but not 50S ribosomal subunits or 70S ribosomes.

The protein resides in the cytoplasm. Its function is as follows. One of several proteins that assist in the late maturation steps of the functional core of the 30S ribosomal subunit. Associates with free 30S ribosomal subunits (but not with 30S subunits that are part of 70S ribosomes or polysomes). Required for efficient processing of 16S rRNA. May interact with the 5'-terminal helix region of 16S rRNA. The sequence is that of Ribosome-binding factor A from Dinoroseobacter shibae (strain DSM 16493 / NCIMB 14021 / DFL 12).